Reading from the N-terminus, the 360-residue chain is Mannose-1-phosphate guanyltransferase beta-B (360 aa).

It belongs to the transferase hexapeptide repeat family.

It catalyses the reaction alpha-D-mannose 1-phosphate + GTP + H(+) = GDP-alpha-D-mannose + diphosphate. It functions in the pathway nucleotide-sugar biosynthesis; GDP-alpha-D-mannose biosynthesis; GDP-alpha-D-mannose from alpha-D-mannose 1-phosphate (GTP route): step 1/1. Functionally, catalyzes the formation of GDP-mannose, an essential precursor of glycan moieties of glycoproteins and glycolipids. This Xenopus laevis (African clawed frog) protein is Mannose-1-phosphate guanyltransferase beta-B (gmppb-b).